The sequence spans 1008 residues: Collagen alpha-1(I) chain (1008 aa).

The segment at 1–1008 (GGISVPGPMG…PGPPGPPGPP (1008 aa)) is disordered. 4-hydroxyproline is present on residues Pro18, Pro21, Pro23, Pro32, Pro35, Pro38, Pro52, Pro67, Pro73, Pro82, and Pro88. Residues 55-69 (NGDDGEAGKPGRPGE) show a composition bias toward basic and acidic residues. The residue at position 91 (Lys91) is a 5-hydroxylysine; alternate. The O-linked (Gal...) hydroxylysine; alternate glycan is linked to Lys91. A Phosphoserine modification is found at Ser97. The span at 105–121 (DAGPAGPKGEPGSPGEN) shows a compositional bias: low complexity. 4-hydroxyproline is present on residues Pro115, Pro118, Pro124, Pro133, Pro139, Pro160, Pro169, Pro172, Pro199, Pro202, Pro214, Pro220, Pro229, Pro235, and Pro238. The segment covering 139–157 (PGASGPAGARGNDGAAGAA) has biased composition (low complexity). Residues 159–171 (PPGPTGPAGPPGF) are compositionally biased toward pro residues. The span at 205–235 (AGAAGPAGNPGADGQPGAKGANGAPGIAGAP) shows a compositional bias: low complexity. Over residues 236 to 255 (GFPGRGPSGPQGPSGPGPKG) the composition is skewed to gly residues. Lys254 carries the 5-hydroxylysine modification. 8 positions are modified to 4-hydroxyproline: Pro260, Pro263, Pro275, Pro284, Pro299, Pro305, Pro314, and Pro320. Gly residues predominate over residues 309-318 (GERGGPGSRG). The residue at position 329 (Lys329) is a 5-hydroxylysine. Residues Pro338, Pro347, Pro353, Pro359, Pro368, Pro371, Pro380, Pro389, Pro395, Pro407, Pro416, Pro425, Pro428, Pro446, Pro463, Pro469, Pro475, Pro481, Pro487, Pro493, Pro505, Pro514, Pro523, Pro535, Pro538, Pro544, Pro550, and Pro559 each carry the 4-hydroxyproline modification. Low complexity predominate over residues 362–388 (KGLTGSPGSPGPDGKTGPPGPAGQDGR). Residues 397 to 416 (ARGQAGVMGFPGPKGAAGEP) are compositionally biased toward low complexity. The span at 475–484 (PGEAGKPGEQ) shows a compositional bias: low complexity. Residues 519–547 (PRGAPGNDGAKGDAGAPGAPGSQGAPGLQ) are compositionally biased toward low complexity. Lys571 is subject to 5-hydroxylysine. A 4-hydroxyproline mark is found at Pro577, Pro592, and Pro598. A compositionally biased stretch (low complexity) spans 604–618 (SGPSGPAGPTGARGA). Phosphoserine is present on Ser607. Residues Pro619, Pro625, Pro628, Pro637, Pro643, Pro661, Pro670, and Pro679 each carry the 4-hydroxyproline modification. The span at 631-658 (AGFAGPPGADGQPGAKGEPGDAGAKGDA) shows a compositional bias: low complexity. Residues 660 to 672 (PPGPAGPTGPPGP) show a composition bias toward pro residues. Lys682 bears the 5-hydroxylysine mark. Residues 687–703 (SAGPPGATGFPGAAGRV) are compositionally biased toward low complexity. 4-hydroxyproline occurs at positions 691 and 697. The residue at position 705 (Pro705) is a 3-hydroxyproline. 4-hydroxyproline occurs at positions 706, 717, 738, 747, 755, 764, 781, 790, 793, 799, 814, 820, 826, 835, and 841. Over residues 731–740 (ETGPAGRPGE) the composition is skewed to low complexity. Residues 752–764 (KGSPGADGPAGAP) show a composition bias toward low complexity. Residues 813 to 823 (PPGPVGPPGLA) are compositionally biased toward pro residues. Low complexity predominate over residues 825–840 (PPGESGREGSPGAEGS). Residue Lys850 is modified to 5-hydroxylysine. Pro residues predominate over residues 858-873 (PGPPGAPGAPGAPGPV). Pro861, Pro864, and Pro867 each carry 4-hydroxyproline. Over residues 894 to 908 (AGPAGARGPAGPQGP) the composition is skewed to low complexity. Residues 909–923 (RGDKGETGEQGDRGI) are compositionally biased toward basic and acidic residues. Lys912 is subject to 5-hydroxylysine. Lys924 carries the 5-hydroxylysine; alternate modification. O-linked (Gal...) hydroxylysine; alternate glycosylation occurs at Lys924. Pro939, Pro942, Pro960, and Pro975 each carry 4-hydroxyproline. Positions 942–975 (PGEQGPSGASGPAGPRGPPGSAGSPGKDGLNGLP) are enriched in low complexity. Pro980 is subject to 3-hydroxyproline. Residue Pro981 is modified to 4-hydroxyproline. Residues 993–1008 (VGPPGPPGPPGPPGPP) show a composition bias toward pro residues. Pro995 is modified (3-hydroxyproline). The residue at position 996 (Pro996) is a 4-hydroxyproline. Residue Pro998 is modified to 3-hydroxyproline. Residue Pro999 is modified to 4-hydroxyproline. A 3-hydroxyproline modification is found at Pro1001. Residues Pro1002, Pro1005, and Pro1008 each carry the 4-hydroxyproline modification.

Belongs to the fibrillar collagen family. As to quaternary structure, trimers of one alpha 2(I) and two alpha 1(I) chains. In terms of processing, contains mostly 4-hydroxyproline. Proline residues at the third position of the tripeptide repeating unit (G-X-Y) are hydroxylated in some or all of the chains. Contains 3-hydroxyproline at a few sites. This modification occurs on the first proline residue in the sequence motif Gly-Pro-Hyp, where Hyp is 4-hydroxyproline. Post-translationally, lysine residues at the third position of the tripeptide repeating unit (G-X-Y) are 5-hydroxylated in some or all of the chains. In terms of processing, O-glycosylated on hydroxylated lysine residues. The O-linked glycan consists of a Glc-Gal disaccharide. As to expression, expressed in bones.

The protein localises to the secreted. It localises to the extracellular space. It is found in the extracellular matrix. Functionally, type I collagen is a member of group I collagen (fibrillar forming collagen). This chain is Collagen alpha-1(I) chain, found in Paramylodon harlani (Harlan's ground sloth).